A 186-amino-acid polypeptide reads, in one-letter code: Elongation factor P (186 aa).

The protein belongs to the elongation factor P family.

The protein localises to the cytoplasm. It functions in the pathway protein biosynthesis; polypeptide chain elongation. Involved in peptide bond synthesis. Stimulates efficient translation and peptide-bond synthesis on native or reconstituted 70S ribosomes in vitro. Probably functions indirectly by altering the affinity of the ribosome for aminoacyl-tRNA, thus increasing their reactivity as acceptors for peptidyl transferase. The protein is Elongation factor P of Acidobacterium capsulatum (strain ATCC 51196 / DSM 11244 / BCRC 80197 / JCM 7670 / NBRC 15755 / NCIMB 13165 / 161).